The chain runs to 619 residues: MNPRLLEYYNQELQHIRESAAEFAEEFPKIAGRLSLSGFECADPYVERLLEGFAYLTARVQLKLDAEYPTFTHNLLEIAYPHYLAPTPSMTVVQLRPDPNEGALSSGFSIERGASLRGQLGPDDQTACEYRTAHPVTLWPLEVAQADYFGNPAAVLGRLAASEPRAKAGLRIRLRSGAGIPFDSLSLDALPLYLHGADEQPYRLYEQLLGNACAVFVRAPDNAWVERLPTSSLRARGFDDEDALLPVVPRAFQGYRLLQEYFALPARFLFVEFSGLNRALRRCHGEELELVVLFGKHDQRLEGTVDAEQLVPFCTPAINLFPRRCDRIHLSDRVNEHHVIVDRTRPLDFEVHSLQQVSGHGSGPEQPFQPFYAVRDPARYGREQAYFRVRREPRVLSSKQRRKGPRSTYVGSETFVALVDANQAPYRHDLRQLGIAALCTNRDLPLFMPIGAHKSDFTLEDSAPVMQVRCLAGPSRPRASRAHDASAWRLISQLSLNYLSLAERGQGAAALRELLRLYGDSGDPALQLQIEGLREVSSKPCTRRLPMPGPIVFGRGLEITLDFDENAFRGTGVFLLGAVFERFLARYVSINSFTETVLRTGERGEVMRWQAKPGSRPNL.

As to quaternary structure, interacts with TssA1.

Core component of the H1 type VI (H1-T6SS) secretion system that plays a role in the release of toxins targeting both eukaryotic and prokaryotic species. The sequence is that of Type VI secretion system component TssF1 from Pseudomonas aeruginosa (strain ATCC 15692 / DSM 22644 / CIP 104116 / JCM 14847 / LMG 12228 / 1C / PRS 101 / PAO1).